Here is a 60-residue protein sequence, read N- to C-terminus: Large ribosomal subunit protein uL30 (60 aa).

It belongs to the universal ribosomal protein uL30 family. In terms of assembly, part of the 50S ribosomal subunit.

This chain is Large ribosomal subunit protein uL30, found in Finegoldia magna (strain ATCC 29328 / DSM 20472 / WAL 2508) (Peptostreptococcus magnus).